The primary structure comprises 124 residues: Ribonuclease pancreatic (124 aa).

A compositionally biased stretch (basic and acidic residues) spans 1 to 13; it reads KETAAAKFERQHM. Residues 1–24 are disordered; that stretch reads KETAAAKFERQHMDSSTSSASSSN. The substrate site is built by Lys-7 and Arg-10. The Proton acceptor role is filled by His-12. 4 disulfide bridges follow: Cys-26–Cys-84, Cys-40–Cys-95, Cys-58–Cys-110, and Cys-65–Cys-72. Residues 41 to 45, Lys-66, and Arg-85 contribute to the substrate site; that span reads KPVBT. His-119 serves as the catalytic Proton donor.

Belongs to the pancreatic ribonuclease family. Monomer. Interacts with and forms tight 1:1 complexes with RNH1. Dimerization of two such complexes may occur. Interaction with RNH1 inhibits this protein. As to expression, pancreas.

The protein resides in the secreted. The catalysed reaction is an [RNA] containing cytidine + H2O = an [RNA]-3'-cytidine-3'-phosphate + a 5'-hydroxy-ribonucleotide-3'-[RNA].. The enzyme catalyses an [RNA] containing uridine + H2O = an [RNA]-3'-uridine-3'-phosphate + a 5'-hydroxy-ribonucleotide-3'-[RNA].. Functionally, endonuclease that catalyzes the cleavage of RNA on the 3' side of pyrimidine nucleotides. Acts on single-stranded and double-stranded RNA. The protein is Ribonuclease pancreatic (RNASE1) of Boselaphus tragocamelus (Nilgai).